We begin with the raw amino-acid sequence, 145 residues long: D-aminoacyl-tRNA deacylase (145 aa).

Residues Gly-137 to Pro-138 carry the Gly-cisPro motif, important for rejection of L-amino acids motif.

Belongs to the DTD family. Homodimer.

The protein localises to the cytoplasm. It carries out the reaction glycyl-tRNA(Ala) + H2O = tRNA(Ala) + glycine + H(+). The catalysed reaction is a D-aminoacyl-tRNA + H2O = a tRNA + a D-alpha-amino acid + H(+). An aminoacyl-tRNA editing enzyme that deacylates mischarged D-aminoacyl-tRNAs. Also deacylates mischarged glycyl-tRNA(Ala), protecting cells against glycine mischarging by AlaRS. Acts via tRNA-based rather than protein-based catalysis; rejects L-amino acids rather than detecting D-amino acids in the active site. By recycling D-aminoacyl-tRNA to D-amino acids and free tRNA molecules, this enzyme counteracts the toxicity associated with the formation of D-aminoacyl-tRNA entities in vivo and helps enforce protein L-homochirality. This Shewanella amazonensis (strain ATCC BAA-1098 / SB2B) protein is D-aminoacyl-tRNA deacylase.